Here is a 152-residue protein sequence, read N- to C-terminus: MDQSQKEVWDDSELRNAFETALHEFKKYHSIEAKGGVSDPDSRLDGEKLISAARTEESISKLEEGEQMINQQTETTLEGDTHIQQFADNKGLSDEKPETRAAETHQEFMEVPPPIRGLTYDETYKKLIMSWYYAGYYTGLAEGLAKSEQRKD.

Residues 26-51 are interacts with yip11/gem2; the sequence is KKYHSIEAKGGVSDPDSRLDGEKLIS. Positions 88 to 110 are disordered; that stretch reads DNKGLSDEKPETRAAETHQEFME. Positions 91–108 are enriched in basic and acidic residues; it reads GLSDEKPETRAAETHQEF. Residues 130–152 are may interact with gem8; the sequence is SWYYAGYYTGLAEGLAKSEQRKD.

This sequence belongs to the SMN family. In terms of assembly, homooligomer; may form homodimers and homotetramers. Part of the core SMN complex at least composed of smn1, yip11/gem2, gem6, gem7 and gem8. Part of the SMN-Sm complex. Interacts with yip11/gem2; the interaction is direct. Interacts with gem8; the interaction is direct. Interacts with proteins of the Sm complex, including smn1, smb1, smd1, smd2 and smd3.

Its subcellular location is the nucleus. In terms of biological role, the SMN complex catalyzes the assembly of small nuclear ribonucleoproteins (snRNPs), the building blocks of the spliceosome, and thereby plays an important role in the splicing of cellular pre-mRNAs. Most spliceosomal snRNPs contain a common set of Sm proteins smb1, smd1, smd2, smd3, sme1, smf1 and smg1 that assemble in a heptameric protein ring on the Sm site of the small nuclear RNA to form the core snRNP (Sm core). In the cytosol, the Sm proteins smd1, smd2, sme1, smf1 and smg1 (5Sm) are trapped in an inactive 6S pICln-Sm complex by the chaperone saf5 that controls the assembly of the core snRNP. To assemble core snRNPs, the SMN complex accepts the trapped 5Sm proteins from saf5 forming an intermediate. Binding of snRNA inside 5Sm triggers eviction of the SMN complex, thereby allowing binding of smd3 and smb1 to complete assembly of the core snRNP. Within the SMN complex, smn1 acts as a structural backbone and together with yip11/gem2 it gathers the Sm complex subunits. The sequence is that of SMN complex subunit smn1 from Schizosaccharomyces pombe (strain 972 / ATCC 24843) (Fission yeast).